Here is a 163-residue protein sequence, read N- to C-terminus: NADH-quinone oxidoreductase subunit I (163 aa).

2 4Fe-4S ferredoxin-type domains span residues 54-84 (LRRY…IDSA) and 94-123 (TRYD…ETHI). The [4Fe-4S] cluster site is built by Cys-64, Cys-67, Cys-70, Cys-74, Cys-103, Cys-106, Cys-109, and Cys-113.

The protein belongs to the complex I 23 kDa subunit family. NDH-1 is composed of 14 different subunits. Subunits NuoA, H, J, K, L, M, N constitute the membrane sector of the complex. It depends on [4Fe-4S] cluster as a cofactor.

It localises to the cell inner membrane. It catalyses the reaction a quinone + NADH + 5 H(+)(in) = a quinol + NAD(+) + 4 H(+)(out). NDH-1 shuttles electrons from NADH, via FMN and iron-sulfur (Fe-S) centers, to quinones in the respiratory chain. The immediate electron acceptor for the enzyme in this species is believed to be ubiquinone. Couples the redox reaction to proton translocation (for every two electrons transferred, four hydrogen ions are translocated across the cytoplasmic membrane), and thus conserves the redox energy in a proton gradient. The chain is NADH-quinone oxidoreductase subunit I from Xanthomonas oryzae pv. oryzae (strain KACC10331 / KXO85).